Reading from the N-terminus, the 240-residue chain is tRNA (guanine-N(1)-)-methyltransferase (240 aa).

S-adenosyl-L-methionine contacts are provided by residues Gly110 and Leu129–Leu134.

It belongs to the RNA methyltransferase TrmD family. Homodimer.

It localises to the cytoplasm. It carries out the reaction guanosine(37) in tRNA + S-adenosyl-L-methionine = N(1)-methylguanosine(37) in tRNA + S-adenosyl-L-homocysteine + H(+). Its function is as follows. Specifically methylates guanosine-37 in various tRNAs. The polypeptide is tRNA (guanine-N(1)-)-methyltransferase (Clostridium botulinum (strain ATCC 19397 / Type A)).